The following is a 686-amino-acid chain: Disintegrin and metalloproteinase domain-containing protein 17 homolog (686 aa).

The first 21 residues, 1 to 21 (MKIQDRSLLIFLVLGILKSDA), serve as a signal peptide directing secretion. Positions 22–177 (FNTRVKRHAP…RRAIAIPSDR (156 aa)) are excised as a propeptide. 3 N-linked (GlcNAc...) asparagine glycosylation sites follow: Asn-59, Asn-206, and Asn-262. At 178–637 (RKDVLNVKRN…TGGVLEFIKT (460 aa)) the chain is on the extracellular side. One can recognise a Peptidase M12B domain in the interval 187 to 445 (NRCTLKLVAD…KWESCFQEEM (259 aa)). 2 disulfides stabilise this stretch: Cys-328-Cys-440 and Cys-394-Cys-424. A Zn(2+)-binding site is contributed by His-370. Residue Glu-371 is part of the active site. 2 residues coordinate Zn(2+): His-374 and His-380. In terms of domain architecture, Disintegrin spans 446–535 (TSFCGNGIVE…ECPSAPPVRD (90 aa)). Asn-501 is a glycosylation site (N-linked (GlcNAc...) asparagine). An intrachain disulfide couples Cys-506 to Cys-527. A glycan (N-linked (GlcNAc...) asparagine) is linked at Asn-581. A helical membrane pass occupies residues 638–658 (HIVVIAIIFFTLIFVGIYKIV). The Cytoplasmic portion of the chain corresponds to 659–686 (KYGENFTEKVTHKTAGGCRSVFVKADVN).

Requires Zn(2+) as cofactor.

Its subcellular location is the cell membrane. Functionally, metalloprotease. Acts together with protease sup-17 to facilitate lin-12/Notch signaling during developmental cell fate decision, including anchor cell/ventral uterine precursor cell decision. By modulating glp-1/Notch signaling, plays a role in germline development. In Caenorhabditis elegans, this protein is Disintegrin and metalloproteinase domain-containing protein 17 homolog.